We begin with the raw amino-acid sequence, 30 residues long: Bacteriocin SRCAM 37 (30 aa).

This sequence belongs to the bacteriocin class IIA/YGNGV family.

The protein localises to the secreted. Functionally, bacteriocin with antibacterial activity against C.jejuni. This chain is Bacteriocin SRCAM 37, found in Paenibacillus polymyxa (Bacillus polymyxa).